A 410-amino-acid chain; its full sequence is MVLSQRQRDELNRAIADYLRSNGYEEAYSVFKKEAELDMNEELDKKYAGLLEKKWTSVIRLQKKVMELESKLNEAKEEFTSGGPLGQKRDPKEWIPRPPEKYALSGHRSPVTRVIFHPVFSVMVSASEDATIKVWDYETGDFERTLKGHTDSVQDISFDHSGKLLTSCSADMTIKLWDFQGFECIRTMHGHDHNVSSVAIMPNGDHLVSASRDKTIKMWEVQTGYCVKTFTGHREWVRMVRPNQDGTLIASCSNDQTVRVWVVATKECKAELREHEHVVECISWAPESSYSSISEATGSETKKSGKPGPFLLSGSRDKTIKMWDVSTGMCLMTLVGHDNWVRGVLFHSGGKFILSCADDKTLRVWDYKNKRCMKTLNAHEHFVTSLDFHKTAPYVVTGSVDQTVKVWECR.

The tract at residues 1 to 38 is required for self-association and interaction with PAFAH1B2 and PAFAH1B3; it reads MVLSQRQRDELNRAIADYLRSNGYEEAYSVFKKEAELD. The interaction with NDE1 stretch occupies residues 1-66; sequence MVLSQRQRDE…SVIRLQKKVM (66 aa). The interval 1-102 is interaction with NDEL1; it reads MVLSQRQRDE…EWIPRPPEKY (102 aa). The region spanning 7-39 is the LisH domain; sequence QRDELNRAIADYLRSNGYEEAYSVFKKEAELDM. Position 53 is an N6-acetyllysine (Lys53). Positions 56-82 form a coiled coil; the sequence is TSVIRLQKKVMELESKLNEAKEEFTSG. Residues 83–410 form an interaction with dynein and dynactin region; the sequence is GPLGQKRDPK…DQTVKVWECR (328 aa). 7 WD repeats span residues 106–147, 148–187, 190–229, 232–271, 274–333, 336–377, and 378–410; these read GHRS…RTLK, GHTDSVQDISFDHSGKLLTSCSADMTIKLWDFQGFECIRT, GHDHNVSSVAIMPNGDHLVSASRDKTIKMWEVQTGYCVKT, GHREWVRMVRPNQDGTLIASCSNDQTVRVWVVATKECKAE, EHEH…CLMT, GHDN…KTLN, and AHEHFVTSLDFHKTAPYVVTGSVDQTVKVWECR. Position 109 is a phosphoserine (Ser109). The interaction with DCX stretch occupies residues 367–409; it reads YKNKRCMKTLNAHEHFVTSLDFHKTAPYVVTGSVDQTVKVWEC. The interval 388–410 is interaction with NDEL1; the sequence is FHKTAPYVVTGSVDQTVKVWECR.

This sequence belongs to the WD repeat LIS1/nudF family. In terms of assembly, can self-associate. Component of the cytosolic PAF-AH (I) heterotetrameric enzyme, which is composed of PAFAH1B1 (beta), PAFAH1B2 (alpha2) and PAFAH1B3 (alpha1) subunits. The catalytic activity of the enzyme resides in the alpha1 (PAFAH1B3) and alpha2 (PAFAH1B2) subunits, whereas the beta subunit (PAFAH1B1) has regulatory activity. Trimer formation is not essential for the catalytic activity. Interacts with the catalytic dimer of PAF-AH (I) heterotetrameric enzyme: interacts with PAFAH1B2 homodimer (alpha2/alpha2 homodimer), PAFAH1B3 homodimer (alpha1/alpha1 homodimer) and PAFAH1B2-PAFAH1B3 heterodimer (alpha2/alpha1 heterodimer). Interacts with DCX, dynein, dynactin, IQGAP1, KATNB1, NDE1, NDEL1, NUDC and RSN. Interacts with DISC1, and this interaction is enhanced by NDEL1. Interacts with DAB1 when DAB1 is phosphorylated in response to RELN/reelin signaling. Interacts with INTS13. Interacts with DCDC1.

The protein resides in the cytoplasm. It is found in the cytoskeleton. Its subcellular location is the microtubule organizing center. The protein localises to the centrosome. It localises to the spindle. The protein resides in the nucleus membrane. Functionally, regulatory subunit (beta subunit) of the cytosolic type I platelet-activating factor (PAF) acetylhydrolase (PAF-AH (I)), an enzyme that catalyzes the hydrolyze of the acetyl group at the sn-2 position of PAF and its analogs and participates in PAF inactivation. Regulates the PAF-AH (I) activity in a catalytic dimer composition-dependent manner. Positively regulates the activity of the minus-end directed microtubule motor protein dynein. May enhance dynein-mediated microtubule sliding by targeting dynein to the microtubule plus end. Required for several dynein- and microtubule-dependent processes such as the maintenance of Golgi integrity, the peripheral transport of microtubule fragments and the coupling of the nucleus and centrosome. Required during brain development for the proliferation of neuronal precursors and the migration of newly formed neurons from the ventricular/subventricular zone toward the cortical plate. Neuronal migration involves a process called nucleokinesis, whereby migrating cells extend an anterior process into which the nucleus subsequently translocates. During nucleokinesis dynein at the nuclear surface may translocate the nucleus towards the centrosome by exerting force on centrosomal microtubules. Also required for proper activation of Rho GTPases and actin polymerization at the leading edge of locomoting cerebellar neurons and postmigratory hippocampal neurons in response to calcium influx triggered via NMDA receptors. May also play a role in other forms of cell locomotion including the migration of fibroblasts during wound healing. Required for dynein recruitment to microtubule plus ends and BICD2-bound cargos. May modulate the Reelin pathway through interaction of the PAF-AH (I) catalytic dimer with VLDLR. This Macaca fascicularis (Crab-eating macaque) protein is Platelet-activating factor acetylhydrolase IB subunit alpha.